Here is a 310-residue protein sequence, read N- to C-terminus: Serine/threonine-protein phosphatase 4 catalytic subunit (310 aa).

4 residues coordinate Mn(2+): aspartate 53, histidine 55, aspartate 81, and asparagine 113. Catalysis depends on histidine 114, which acts as the Proton donor. Positions 163 and 237 each coordinate Mn(2+). Leucine 310 is subject to Leucine methyl ester.

This sequence belongs to the PPP phosphatase family. PP-4 (PP-X) subfamily. As to quaternary structure, catalytic subunit of the histone H2A phosphatase complex (HTP-C) containing PPH3, PSY2 and PSY4. The cofactor is Mn(2+).

It is found in the cytoplasm. Its subcellular location is the nucleus. It carries out the reaction O-phospho-L-seryl-[protein] + H2O = L-seryl-[protein] + phosphate. The enzyme catalyses O-phospho-L-threonyl-[protein] + H2O = L-threonyl-[protein] + phosphate. Involved in the dephosphorylation and activation of the transcription factor GLN3 in response to nutrient availability. Forms the histone H2A phosphatase complex in association with the regulatory subunits PSY2 and PSY4, which dephosphorylates H2AS128ph (gamma-H2A) that has been displaced from sites of DNA lesions in the double-stranded DNA break repair process. Dephosphorylation is necessary for efficient recovery from the DNA damage checkpoint. The sequence is that of Serine/threonine-protein phosphatase 4 catalytic subunit (PPH3) from Eremothecium gossypii (strain ATCC 10895 / CBS 109.51 / FGSC 9923 / NRRL Y-1056) (Yeast).